Here is a 351-residue protein sequence, read N- to C-terminus: Phosphoribosylformylglycinamidine cyclo-ligase (351 aa).

It belongs to the AIR synthase family.

Its subcellular location is the cytoplasm. The catalysed reaction is 2-formamido-N(1)-(5-O-phospho-beta-D-ribosyl)acetamidine + ATP = 5-amino-1-(5-phospho-beta-D-ribosyl)imidazole + ADP + phosphate + H(+). Its pathway is purine metabolism; IMP biosynthesis via de novo pathway; 5-amino-1-(5-phospho-D-ribosyl)imidazole from N(2)-formyl-N(1)-(5-phospho-D-ribosyl)glycinamide: step 2/2. This chain is Phosphoribosylformylglycinamidine cyclo-ligase, found in Burkholderia cenocepacia (strain ATCC BAA-245 / DSM 16553 / LMG 16656 / NCTC 13227 / J2315 / CF5610) (Burkholderia cepacia (strain J2315)).